The primary structure comprises 892 residues: NACHT, LRR and PYD domains-containing protein 6 (892 aa).

In terms of domain architecture, Pyrin spans 1-103; the sequence is MDQPEAPCSS…AAQLQERRLQ (103 aa). Positions 158 to 181 are disordered; the sequence is APEEAMGPAEEPEPGRARRSDTHT. Basic and acidic residues predominate over residues 170–181; it reads EPGRARRSDTHT. The NACHT domain maps to 196–513; sequence LTVVLQGPAG…EFLAALSYLL (318 aa). 202-209 contacts ATP; that stretch reads GPAGIGKT. The interval 352–356 is disordered; the sequence is KDKKK. One copy of the LRR 1 repeat lies at 462–487; sequence EKELEQLELRGSKVQTLFLSKKELPG. The segment at 590-614 is disordered; the sequence is APEVTEGAKGLEDTEEPEEEEEGEE. Positions 602 to 614 are enriched in acidic residues; the sequence is DTEEPEEEEEGEE. LRR repeat units lie at residues 727-747, 755-778, 811-834, and 845-868; these read LCHL…VCRD, APAL…MLSE, SPAL…YLCA, and TLSL…KRAK.

The protein belongs to the NLRP family. As to quaternary structure, homomultimer; forms the NLRP6 inflammasome polymeric complex, a filament composed of homopolymers in response to pathogens and other damage-associated signals. The core of NLRP6 inflammasomes consists of a signal sensor component (NLRP6), an adapter (PYCARD/ASC), which recruits effector pro-inflammatory caspases (CASP1 and CASP4). Interacts (via pyrin domain) with PYCARD/ASC (via pyrin domain); interaction takes place following NLRP6 activation and formation of liquid-liquid phase separation (LLPS), initiating nucleation which greatly enhances further addition of soluble PYCARD/ASC molecules to the speck in a prion-like polymerization process. Clustered PYCARD/ASC nucleates the formation of CASP1 (or possibly CASP4) filaments through the interaction of their respective CARD domains, acting as a platform for CASP1 polymerization. CASP1 filament formation increases local enzyme concentration, resulting in trans-autocleavage and activation. Active CASP1 then processes IL1B and IL18 precursors, leading to the release of mature cytokines in the extracellular milieu and inflammatory response. Interacts with DHX15. Post-translationally, polyubiquitinated with 'Lys-63'-linked chains, promoting the interaction with PYCARD/ASC and formation of the NLRP6 inflammasome. Deubiquitination by CYLD decreases the interaction with PYCARD/ASC. As to expression, expressed in peripheral blood leukocytes, predominantly in granulocytes and, at lower levels, in CD4(+) and CD8(+) T-cells. Expressed in colonic myofibroblasts (at protein level).

Its subcellular location is the cytoplasm. It localises to the cytosol. The protein resides in the inflammasome. The protein localises to the cell membrane. It is found in the nucleus membrane. In terms of biological role, acts as the sensor component of the NLRP6 inflammasome, which mediates inflammasome activation in response to various pathogen-associated signals, leading to maturation and secretion of IL1B and IL18. Inflammasomes are supramolecular complexes that assemble in the cytosol in response to pathogens and other damage-associated signals and play critical roles in innate immunity and inflammation. Acts as a recognition receptor (PRR): recognizes and binds specific pathogens and other damage-associated signals, such as lipoteichoic acid (LTA), a cell-wall component of Gram-positive bacteria, or double stranded RNA (dsRNA). May also recognize and bind lipopolysaccharide (LPS), a major component of the outer membrane of Gram-negative bacteria; however, LPS is probably not a major activator of the NLRP6 inflammasome. Following LTA- or dsRNA-binding, NLRP6 undergoes liquid-liquid phase separation (LLPS), enhancing multivalent interactions, an essential step for the formation of the NLRP6 inflammasome polymeric complex. The NLRP6 inflammasome acts by promoting recruitment of effector pro-inflammatory caspases (CASP1 and/or CASP4) that catalyze maturation and secretion of IL1B and IL18 in the extracellular milieu. The NLRP6 inflammasome plays a central role in the maintenance of epithelial integrity and host defense against microbial infections in the intestine. Required to restrict infection against Gram-positive bacteria by recognizing lipoteichoic acid (LTA), leading to recruitment of CASP4 and CASP1, and subsequent maturation and secretion of IL1B and IL18. Involved in intestinal antiviral innate immunity together with DHX15: recognizes and binds viral dsRNA to restrict infection by enteric viruses through the interferon pathway and GSDMD-dependent release of IL18. Required to prevent infection by the apicomplexan parasite Cryptosporidium in enterocytes by promoting GSDMD-dependent release of IL18. The NLRP6 inflammasome may also regulate the gut microbiota composition by acting as a sensor of microbiota-associated metabolites to form a PYCARD/ASC-dependent inflammasome for downstream IL18 release and secretion of antimicrobial peptides. Essential for gut mucosal self-renewal and proliferation. Regulate mucus secretion in an inflammasome- and autophagy-dependent manner to prevent invasion by enteric bacteria,. During systemic bacterial infections, the NLRP6 inflammasome negatively regulates neutrophil recruitment and neutrophil extracellular traps (NETs) formation. May promote peripheral nerve recovery following injury via an inflammasome-independent mechanism. In Homo sapiens (Human), this protein is NACHT, LRR and PYD domains-containing protein 6.